Reading from the N-terminus, the 218-residue chain is Adenylate kinase (218 aa).

10-15 (GAGKGT) serves as a coordination point for ATP. The tract at residues 30–59 (STGDMLRAAINEGTPLGLEAKKVMDAGKLV) is NMP. AMP-binding positions include threonine 31, arginine 36, 57–59 (KLV), 85–88 (GFPR), and glutamine 92. The LID stretch occupies residues 122–159 (GRRVHPASGRTYHVLFNPPAKEGVDDITGDPLVQREDD). ATP is bound by residues arginine 123 and 132 to 133 (TY). AMP contacts are provided by arginine 156 and arginine 167. Glycine 203 provides a ligand contact to ATP.

This sequence belongs to the adenylate kinase family. As to quaternary structure, monomer.

Its subcellular location is the cytoplasm. It catalyses the reaction AMP + ATP = 2 ADP. It participates in purine metabolism; AMP biosynthesis via salvage pathway; AMP from ADP: step 1/1. Catalyzes the reversible transfer of the terminal phosphate group between ATP and AMP. Plays an important role in cellular energy homeostasis and in adenine nucleotide metabolism. The polypeptide is Adenylate kinase (Chlorobium phaeobacteroides (strain BS1)).